Consider the following 570-residue polypeptide: Berberine bridge enzyme-like 19 (570 aa).

Residues 1–30 (MLTTPPRTFVSVPFFFFFLLFLSLPLSSFS) form the signal peptide. C42 and C105 are disulfide-bonded. The N-linked (GlcNAc...) asparagine glycan is linked to N80. Residues 83–257 (STLKPTIIIT…LGYKVKLVPV (175 aa)) form the FAD-binding PCMH-type domain. A cross-link (6-(S-cysteinyl)-8alpha-(pros-histidyl)-FAD (His-Cys)) is located at residues 120–182 (HDYDGLSYIS…RVHGFPAGVC (63 aa)). 2 N-linked (GlcNAc...) asparagine glycosylation sites follow: N341 and N359.

This sequence belongs to the oxygen-dependent FAD-linked oxidoreductase family. The cofactor is FAD. The FAD cofactor is bound via a bicovalent 6-S-cysteinyl, 8alpha-N1-histidyl FAD linkage.

The protein localises to the secreted. The protein resides in the cell wall. This is Berberine bridge enzyme-like 19 from Arabidopsis thaliana (Mouse-ear cress).